Consider the following 397-residue polypeptide: Elongation factor Tu (397 aa).

The tr-type G domain maps to 10–206; the sequence is KPHVNIGTIG…AVDTAIPEPE (197 aa). Residues 19–26 are G1; the sequence is GHIDHGKT. 19–26 contacts GTP; it reads GHIDHGKT. Residue Thr26 coordinates Mg(2+). The segment at 62–66 is G2; that stretch reads GITIS. Residues 83-86 are G3; the sequence is DCPG. GTP-binding positions include 83–87 and 138–141; these read DCPGH and NKAD. The interval 138 to 141 is G4; it reads NKAD. The tract at residues 176–178 is G5; sequence SAL.

The protein belongs to the TRAFAC class translation factor GTPase superfamily. Classic translation factor GTPase family. EF-Tu/EF-1A subfamily. As to quaternary structure, monomer.

The protein resides in the cytoplasm. It carries out the reaction GTP + H2O = GDP + phosphate + H(+). Its function is as follows. GTP hydrolase that promotes the GTP-dependent binding of aminoacyl-tRNA to the A-site of ribosomes during protein biosynthesis. The protein is Elongation factor Tu of Kineococcus radiotolerans (strain ATCC BAA-149 / DSM 14245 / SRS30216).